A 124-amino-acid chain; its full sequence is Small ribosomal subunit protein uS12 (124 aa).

Residue aspartate 89 is modified to 3-methylthioaspartic acid.

Belongs to the universal ribosomal protein uS12 family. Part of the 30S ribosomal subunit. Contacts proteins S8 and S17. May interact with IF1 in the 30S initiation complex.

In terms of biological role, with S4 and S5 plays an important role in translational accuracy. Its function is as follows. Interacts with and stabilizes bases of the 16S rRNA that are involved in tRNA selection in the A site and with the mRNA backbone. Located at the interface of the 30S and 50S subunits, it traverses the body of the 30S subunit contacting proteins on the other side and probably holding the rRNA structure together. The combined cluster of proteins S8, S12 and S17 appears to hold together the shoulder and platform of the 30S subunit. The chain is Small ribosomal subunit protein uS12 from Histophilus somni (strain 129Pt) (Haemophilus somnus).